The sequence spans 76 residues: Kappa-actitoxin-Avd4n (76 aa).

The first 19 residues, 1-19 (MNKAFFLCLVVLCAAVVFA), serve as a signal peptide directing secretion. A propeptide spanning residues 20 to 31 (AEDLQKGKHAPF) is cleaved from the precursor. 2 cysteine pairs are disulfide-bonded: Cys-37–Cys-72 and Cys-39–Cys-65.

Belongs to the sea anemone type 3 (BDS) potassium channel toxin family. Lacks the conventional Cys residue at position 55. Thus, only 2 disulfide are possible present. In terms of tissue distribution, experimental results show no expression in the ectodermal tissue from the distal and proximal tentacles, body wall, and oral disk. Since paralogs are expressed in this tissue, an expression of this toxin in this tissue is probable. The negative results could be explained by the very low abundance of EST sequences.

It is found in the secreted. The protein localises to the nematocyst. Blocks Kv3 voltage-gated potassium channels. Reduces blood pressure. The protein is Kappa-actitoxin-Avd4n of Anemonia viridis (Snakelocks anemone).